Consider the following 121-residue polypeptide: Small ribosomal subunit protein uS13 (121 aa).

Positions 92–121 are disordered; the sequence is RRGLPVRGQKTKNNSRTRKGPRKTMANKKK.

This sequence belongs to the universal ribosomal protein uS13 family. In terms of assembly, part of the 30S ribosomal subunit. Forms a loose heterodimer with protein S19. Forms two bridges to the 50S subunit in the 70S ribosome.

Its function is as follows. Located at the top of the head of the 30S subunit, it contacts several helices of the 16S rRNA. In the 70S ribosome it contacts the 23S rRNA (bridge B1a) and protein L5 of the 50S subunit (bridge B1b), connecting the 2 subunits; these bridges are implicated in subunit movement. Contacts the tRNAs in the A and P-sites. This Oceanobacillus iheyensis (strain DSM 14371 / CIP 107618 / JCM 11309 / KCTC 3954 / HTE831) protein is Small ribosomal subunit protein uS13.